Consider the following 552-residue polypeptide: ATP synthase subunit alpha (552 aa).

173–180 (GDRQTGKT) is a binding site for ATP. Residues 526 to 552 (ASPLDPSAVRKESIPVHRAPARTDDEG) form a disordered region. The span at 533-552 (AVRKESIPVHRAPARTDDEG) shows a compositional bias: basic and acidic residues.

It belongs to the ATPase alpha/beta chains family. As to quaternary structure, F-type ATPases have 2 components, CF(1) - the catalytic core - and CF(0) - the membrane proton channel. CF(1) has five subunits: alpha(3), beta(3), gamma(1), delta(1), epsilon(1). CF(0) has three main subunits: a(1), b(2) and c(9-12). The alpha and beta chains form an alternating ring which encloses part of the gamma chain. CF(1) is attached to CF(0) by a central stalk formed by the gamma and epsilon chains, while a peripheral stalk is formed by the delta and b chains.

It is found in the cell membrane. It catalyses the reaction ATP + H2O + 4 H(+)(in) = ADP + phosphate + 5 H(+)(out). Produces ATP from ADP in the presence of a proton gradient across the membrane. The alpha chain is a regulatory subunit. In Frankia alni (strain DSM 45986 / CECT 9034 / ACN14a), this protein is ATP synthase subunit alpha.